The sequence spans 399 residues: Elongation factor Tu (399 aa).

The tr-type G domain occupies 10–208 (KPHVNIGTIG…TVDSYIPEPE (199 aa)). Residues 19-26 (GHVDHGKT) are G1. 19-26 (GHVDHGKT) is a binding site for GTP. Position 26 (T26) interacts with Mg(2+). The interval 64–68 (GITIN) is G2. Positions 85–88 (DAPG) are G3. Residues 85–89 (DAPGH) and 140–143 (NKVD) contribute to the GTP site. Residues 140–143 (NKVD) form a G4 region. Positions 178–180 (SAL) are G5.

It belongs to the TRAFAC class translation factor GTPase superfamily. Classic translation factor GTPase family. EF-Tu/EF-1A subfamily. Monomer.

Its subcellular location is the cytoplasm. The catalysed reaction is GTP + H2O = GDP + phosphate + H(+). Its function is as follows. GTP hydrolase that promotes the GTP-dependent binding of aminoacyl-tRNA to the A-site of ribosomes during protein biosynthesis. The chain is Elongation factor Tu from Streptococcus pyogenes serotype M12 (strain MGAS2096).